Here is a 474-residue protein sequence, read N- to C-terminus: tRNA-2-methylthio-N(6)-dimethylallyladenosine synthase (474 aa).

One can recognise an MTTase N-terminal domain in the interval 3 to 120 (KKLHIKTWGC…LPEMIDQVQR (118 aa)). [4Fe-4S] cluster contacts are provided by cysteine 12, cysteine 49, cysteine 83, cysteine 157, cysteine 161, and cysteine 164. The 233-residue stretch at 143–375 (RADGPTAFVS…QDRITQQAMR (233 aa)) folds into the Radical SAM core domain. A TRAM domain is found at 378-441 (RQMLGTVQRI…TNSLRGIFIR (64 aa)).

It belongs to the methylthiotransferase family. MiaB subfamily. In terms of assembly, monomer. It depends on [4Fe-4S] cluster as a cofactor.

The protein resides in the cytoplasm. The enzyme catalyses N(6)-dimethylallyladenosine(37) in tRNA + (sulfur carrier)-SH + AH2 + 2 S-adenosyl-L-methionine = 2-methylsulfanyl-N(6)-dimethylallyladenosine(37) in tRNA + (sulfur carrier)-H + 5'-deoxyadenosine + L-methionine + A + S-adenosyl-L-homocysteine + 2 H(+). Its function is as follows. Catalyzes the methylthiolation of N6-(dimethylallyl)adenosine (i(6)A), leading to the formation of 2-methylthio-N6-(dimethylallyl)adenosine (ms(2)i(6)A) at position 37 in tRNAs that read codons beginning with uridine. The protein is tRNA-2-methylthio-N(6)-dimethylallyladenosine synthase of Shewanella denitrificans (strain OS217 / ATCC BAA-1090 / DSM 15013).